A 346-amino-acid chain; its full sequence is Low specificity L-threonine aldolase (346 aa).

Lysine 207 is subject to N6-(pyridoxal phosphate)lysine.

It belongs to the threonine aldolase family. As to quaternary structure, homotetramer. The cofactor is pyridoxal 5'-phosphate.

It carries out the reaction L-threonine = acetaldehyde + glycine. It catalyses the reaction L-allo-threonine = acetaldehyde + glycine. Its function is as follows. Catalyzes the cleavage of L-allo-threonine and L-threonine to glycine and acetaldehyde. The protein is Low specificity L-threonine aldolase (ltaE) of Pseudomonas aeruginosa (strain ATCC 15692 / DSM 22644 / CIP 104116 / JCM 14847 / LMG 12228 / 1C / PRS 101 / PAO1).